The chain runs to 100 residues: Aspartyl/glutamyl-tRNA(Asn/Gln) amidotransferase subunit C (100 aa).

Belongs to the GatC family. In terms of assembly, heterotrimer of A, B and C subunits.

The enzyme catalyses L-glutamyl-tRNA(Gln) + L-glutamine + ATP + H2O = L-glutaminyl-tRNA(Gln) + L-glutamate + ADP + phosphate + H(+). It carries out the reaction L-aspartyl-tRNA(Asn) + L-glutamine + ATP + H2O = L-asparaginyl-tRNA(Asn) + L-glutamate + ADP + phosphate + 2 H(+). Its function is as follows. Allows the formation of correctly charged Asn-tRNA(Asn) or Gln-tRNA(Gln) through the transamidation of misacylated Asp-tRNA(Asn) or Glu-tRNA(Gln) in organisms which lack either or both of asparaginyl-tRNA or glutaminyl-tRNA synthetases. The reaction takes place in the presence of glutamine and ATP through an activated phospho-Asp-tRNA(Asn) or phospho-Glu-tRNA(Gln). This chain is Aspartyl/glutamyl-tRNA(Asn/Gln) amidotransferase subunit C, found in Corynebacterium aurimucosum (strain ATCC 700975 / DSM 44827 / CIP 107346 / CN-1) (Corynebacterium nigricans).